The primary structure comprises 554 residues: CTP synthase (554 aa).

The tract at residues 1 to 270 is amidoligase domain; the sequence is MTKFVFVTGG…DRIICEELRI (270 aa). Residue Ser-13 participates in CTP binding. Ser-13 lines the UTP pocket. ATP contacts are provided by residues 14–19 and Asp-71; that span reads SLGKGI. Mg(2+) contacts are provided by Asp-71 and Glu-144. Residues 151–153, 191–196, and Lys-227 each bind CTP; these read DIE and KTKPTQ. UTP is bound by residues 191–196 and Lys-227; that span reads KTKPTQ. Positions 295 to 547 constitute a Glutamine amidotransferase type-1 domain; it reads TIGMVGKYVD…VEAALAHRQR (253 aa). Residue Gly-356 coordinates L-glutamine. Cys-383 serves as the catalytic Nucleophile; for glutamine hydrolysis. L-glutamine is bound by residues 384–387, Glu-407, and Arg-473; that span reads LGMQ. Residues His-520 and Glu-522 contribute to the active site.

It belongs to the CTP synthase family. Homotetramer.

It carries out the reaction UTP + L-glutamine + ATP + H2O = CTP + L-glutamate + ADP + phosphate + 2 H(+). The enzyme catalyses L-glutamine + H2O = L-glutamate + NH4(+). It catalyses the reaction UTP + NH4(+) + ATP = CTP + ADP + phosphate + 2 H(+). The protein operates within pyrimidine metabolism; CTP biosynthesis via de novo pathway; CTP from UDP: step 2/2. With respect to regulation, allosterically activated by GTP, when glutamine is the substrate; GTP has no effect on the reaction when ammonia is the substrate. The allosteric effector GTP functions by stabilizing the protein conformation that binds the tetrahedral intermediate(s) formed during glutamine hydrolysis. Inhibited by the product CTP, via allosteric rather than competitive inhibition. Its function is as follows. Catalyzes the ATP-dependent amination of UTP to CTP with either L-glutamine or ammonia as the source of nitrogen. Regulates intracellular CTP levels through interactions with the four ribonucleotide triphosphates. This is CTP synthase from Ralstonia nicotianae (strain ATCC BAA-1114 / GMI1000) (Ralstonia solanacearum).